The sequence spans 350 residues: tRNA uridine(34) hydroxylase (350 aa).

One can recognise a Rhodanese domain in the interval 146–240; sequence DDPDAVFIDM…YARRAREQGL (95 aa). Cys-200 (cysteine persulfide intermediate) is an active-site residue. Residues 319-328 show a composition bias toward basic and acidic residues; that stretch reads RRRRAGRENG. The interval 319 to 350 is disordered; the sequence is RRRRAGRENGNKIFNKSRGRLNSKLSIPDPAE.

It belongs to the TrhO family.

The enzyme catalyses uridine(34) in tRNA + AH2 + O2 = 5-hydroxyuridine(34) in tRNA + A + H2O. Catalyzes oxygen-dependent 5-hydroxyuridine (ho5U) modification at position 34 in tRNAs. This is tRNA uridine(34) hydroxylase from Salmonella dublin (strain CT_02021853).